Here is a 428-residue protein sequence, read N- to C-terminus: MDKMKIIGGDRLRGTIKVSGAKNSAVALIPAAILADSPVTIEGLPDISDVHILGSLIEEIGGSFSFDGKEAVIDPTNMVSMPLPNGKVKKLRASYYLMGAMLGRFKRAVVGLPGGCHLGPRPIDQHIKGFEALGATVTNEQGAIYLRAEELRGARIFLDVVSVGATINIMLAAVRAKGRTIIENAAKEPEIIDVATLLSNMGAKIKGAGTDVIRIDGVEKLSGCRHAIIPDRIEAGTYMIAAAATNGEVVVDNVIPQHVESLTAKLREMGVRVETGEDQILVCGTDVLKAVDVKTLVYPGFPTDLQQPFTALLTKANGTSVVTDTIYSARFKHVDELRRMNANVKVEGRSAIVTGPVKLQGAKVKASDLRAGAALVIAGLMAEGVTEITGVEHIDRGYSNLVEKLSDIGATIWREKMTDEEIEQVKNA.

22–23 (KN) is a binding site for phosphoenolpyruvate. Arginine 92 provides a ligand contact to UDP-N-acetyl-alpha-D-glucosamine. Cysteine 116 functions as the Proton donor in the catalytic mechanism. Cysteine 116 carries the post-translational modification 2-(S-cysteinyl)pyruvic acid O-phosphothioketal. Residues 121 to 125 (RPIDQ), aspartate 304, and isoleucine 326 contribute to the UDP-N-acetyl-alpha-D-glucosamine site.

It belongs to the EPSP synthase family. MurA subfamily.

The protein localises to the cytoplasm. It catalyses the reaction phosphoenolpyruvate + UDP-N-acetyl-alpha-D-glucosamine = UDP-N-acetyl-3-O-(1-carboxyvinyl)-alpha-D-glucosamine + phosphate. It participates in cell wall biogenesis; peptidoglycan biosynthesis. Functionally, cell wall formation. Adds enolpyruvyl to UDP-N-acetylglucosamine. The protein is UDP-N-acetylglucosamine 1-carboxyvinyltransferase 2 of Geobacillus kaustophilus (strain HTA426).